We begin with the raw amino-acid sequence, 196 residues long: Holliday junction branch migration complex subunit RuvA (196 aa).

Residues 1 to 63 are domain I; that stretch reads MYDYIKGILT…EDAHLLYGFA (63 aa). The interval 64–142 is domain II; that stretch reads TENEKSVFLS…MSEEAGPVQQ (79 aa). A flexible linker region spans residues 142 to 146; sequence QVAPS. The segment at 147–196 is domain III; that stretch reads SENIALEEAMEAMEALGYRPAELKKIKKFFEGTNDTAENYIKSALKMLMK.

It belongs to the RuvA family. In terms of assembly, homotetramer. Forms an RuvA(8)-RuvB(12)-Holliday junction (HJ) complex. HJ DNA is sandwiched between 2 RuvA tetramers; dsDNA enters through RuvA and exits via RuvB. An RuvB hexamer assembles on each DNA strand where it exits the tetramer. Each RuvB hexamer is contacted by two RuvA subunits (via domain III) on 2 adjacent RuvB subunits; this complex drives branch migration. In the full resolvosome a probable DNA-RuvA(4)-RuvB(12)-RuvC(2) complex forms which resolves the HJ.

It localises to the cytoplasm. Its function is as follows. The RuvA-RuvB-RuvC complex processes Holliday junction (HJ) DNA during genetic recombination and DNA repair, while the RuvA-RuvB complex plays an important role in the rescue of blocked DNA replication forks via replication fork reversal (RFR). RuvA specifically binds to HJ cruciform DNA, conferring on it an open structure. The RuvB hexamer acts as an ATP-dependent pump, pulling dsDNA into and through the RuvAB complex. HJ branch migration allows RuvC to scan DNA until it finds its consensus sequence, where it cleaves and resolves the cruciform DNA. The chain is Holliday junction branch migration complex subunit RuvA from Streptococcus suis (strain 98HAH33).